We begin with the raw amino-acid sequence, 449 residues long: Phosphoglucosamine mutase (449 aa).

Ser102 acts as the Phosphoserine intermediate in catalysis. Mg(2+)-binding residues include Ser102, Asp241, Asp243, and Asp245. At Ser102 the chain carries Phosphoserine.

This sequence belongs to the phosphohexose mutase family. Mg(2+) serves as cofactor. Post-translationally, activated by phosphorylation.

It carries out the reaction alpha-D-glucosamine 1-phosphate = D-glucosamine 6-phosphate. Catalyzes the conversion of glucosamine-6-phosphate to glucosamine-1-phosphate. The protein is Phosphoglucosamine mutase of Pseudoalteromonas translucida (strain TAC 125).